The primary structure comprises 341 residues: Biotin synthase (341 aa).

The Radical SAM core domain maps to 40–264; that stretch reads NSVKLNYLVN…VAPRSELRIA (225 aa). Residues C55, C59, and C62 each contribute to the [4Fe-4S] cluster site. The [2Fe-2S] cluster site is built by C99, C132, C192, and R262. The interval 317 to 341 is disordered; that stretch reads ASAPQGGVEPVLRKRGAGTELQPNA.

This sequence belongs to the radical SAM superfamily. Biotin synthase family. Homodimer. Requires [4Fe-4S] cluster as cofactor. [2Fe-2S] cluster is required as a cofactor.

The enzyme catalyses (4R,5S)-dethiobiotin + (sulfur carrier)-SH + 2 reduced [2Fe-2S]-[ferredoxin] + 2 S-adenosyl-L-methionine = (sulfur carrier)-H + biotin + 2 5'-deoxyadenosine + 2 L-methionine + 2 oxidized [2Fe-2S]-[ferredoxin]. Its pathway is cofactor biosynthesis; biotin biosynthesis; biotin from 7,8-diaminononanoate: step 2/2. In terms of biological role, catalyzes the conversion of dethiobiotin (DTB) to biotin by the insertion of a sulfur atom into dethiobiotin via a radical-based mechanism. This Renibacterium salmoninarum (strain ATCC 33209 / DSM 20767 / JCM 11484 / NBRC 15589 / NCIMB 2235) protein is Biotin synthase.